The chain runs to 315 residues: Transaldolase (315 aa).

Catalysis depends on K131, which acts as the Schiff-base intermediate with substrate.

It belongs to the transaldolase family. Type 1 subfamily. As to quaternary structure, homodimer.

The protein localises to the cytoplasm. The catalysed reaction is D-sedoheptulose 7-phosphate + D-glyceraldehyde 3-phosphate = D-erythrose 4-phosphate + beta-D-fructose 6-phosphate. The protein operates within carbohydrate degradation; pentose phosphate pathway; D-glyceraldehyde 3-phosphate and beta-D-fructose 6-phosphate from D-ribose 5-phosphate and D-xylulose 5-phosphate (non-oxidative stage): step 2/3. Functionally, transaldolase is important for the balance of metabolites in the pentose-phosphate pathway. This chain is Transaldolase, found in Actinobacillus pleuropneumoniae serotype 7 (strain AP76).